The sequence spans 261 residues: Triosephosphate isomerase (261 aa).

Residue 10-12 (NWK) coordinates substrate. The active-site Electrophile is histidine 100. The active-site Proton acceptor is glutamate 172. Substrate-binding positions include glycine 178, serine 218, and 239–240 (GG).

It belongs to the triosephosphate isomerase family. Homodimer.

It is found in the cytoplasm. It carries out the reaction D-glyceraldehyde 3-phosphate = dihydroxyacetone phosphate. Its pathway is carbohydrate biosynthesis; gluconeogenesis. It participates in carbohydrate degradation; glycolysis; D-glyceraldehyde 3-phosphate from glycerone phosphate: step 1/1. Involved in the gluconeogenesis. Catalyzes stereospecifically the conversion of dihydroxyacetone phosphate (DHAP) to D-glyceraldehyde-3-phosphate (G3P). The protein is Triosephosphate isomerase of Rhodococcus jostii (strain RHA1).